The following is an 885-amino-acid chain: Conidiophore development regulator abaA (885 aa).

The segment covering 1–20 (MSSLFQPRPVLSSQRYSQSP) has biased composition (polar residues). Residues 1 to 25 (MSSLFQPRPVLSSQRYSQSPDYVDT) are disordered. The segment at residues 124 to 217 (QKDKGGVWRR…QVVKKFFEDL (94 aa)) is a DNA-binding region (TEA). Disordered stretches follow at residues 502-539 (KEKRRKYADGDGKKELERAGSKRKRSEDEGDAASWTRR) and 817-885 (APGS…TAGW). Composition is skewed to basic and acidic residues over residues 508-521 (YADGDGKKELERAG) and 831-840 (VESHAGDHHG).

It belongs to the TEC1 family.

Its subcellular location is the nucleus. In terms of biological role, brlA, abaA and wetA are pivotal regulators of conidiophore development and conidium maturation. They act individually and together to regulate their own expression and that of numerous other sporulation-specific genes. BrlA, abaA and wetA act together to positively regulate the expression of the Pks1 gene cluster that mediates the biosynthesis of an anthraquinone derivative pigment that contributes to conidial pigmentation that provides protection from UV radiation, heat and cold stress. The sequence is that of Conidiophore development regulator abaA from Metarhizium robertsii (strain ARSEF 23 / ATCC MYA-3075) (Metarhizium anisopliae (strain ARSEF 23)).